Here is a 396-residue protein sequence, read N- to C-terminus: uncharacterized protein (396 aa).

Position 219 is an N6-(pyridoxal phosphate)lysine (K219).

It belongs to the class-V pyridoxal-phosphate-dependent aminotransferase family. Requires pyridoxal 5'-phosphate as cofactor.

The protein localises to the cytoplasm. Its subcellular location is the nucleus. This is an uncharacterized protein from Schizosaccharomyces pombe (strain 972 / ATCC 24843) (Fission yeast).